The chain runs to 588 residues: Actin-histidine N-methyltransferase (588 aa).

Residues 1 to 25 (MGKKSRVKTQKSGTGATASVSPKET) are disordered. A compositionally biased stretch (polar residues) spans 10-25 (QKSGTGATASVSPKET). S-adenosyl-L-methionine-binding positions include arginine 75, 104-106 (EGF), arginine 254, 275-279 (DMCNH), and 325-327 (SGF). Residues 94 to 314 (EGFEMVNFKE…AGEQIYIFYG (221 aa)) form the SET domain. Residues 546 to 588 (VNGENSIPNGTRSGKENFNQEGSERATEGTKESSSDSTAGARE) form a disordered region. Over residues 548–566 (GENSIPNGTRSGKENFNQE) the composition is skewed to polar residues. A compositionally biased stretch (basic and acidic residues) spans 567–579 (GSERATEGTKESS).

The protein belongs to the class V-like SAM-binding methyltransferase superfamily. SETD3 actin-histidine methyltransferase family. As to quaternary structure, interacts with MYOD1. Phosphorylated by GSK3B, which is required for recognition by the SCF(FBXW7) complex and subsequent degradation. Post-translationally, ubiquitinated by the SCF(FBXW7) complex following phosphorylation by GSK3B, leading to its degradation by the proteasome.

The protein localises to the cytoplasm. It is found in the nucleus. It carries out the reaction L-histidyl-[protein] + S-adenosyl-L-methionine = N(tele)-methyl-L-histidyl-[protein] + S-adenosyl-L-homocysteine + H(+). In terms of biological role, protein-histidine N-methyltransferase that specifically mediates 3-methylhistidine (tele-methylhistidine) methylation of actin at 'His-73'. Histidine methylation of actin is required for smooth muscle contraction of the laboring uterus during delivery. Does not have protein-lysine N-methyltransferase activity and probably only catalyzes histidine methylation of actin. In Canis lupus familiaris (Dog), this protein is Actin-histidine N-methyltransferase.